Reading from the N-terminus, the 365-residue chain is Membrane cofactor protein (365 aa).

The signal sequence occupies residues 1-44 (MTAAPLMPDSTHPCRRRKSYTFFWCSLGVYAEALLFLLSHLSDA). 4 Sushi domains span residues 45-106 (CELP…GCIK), 107-170 (VQCT…HCEK), 171-236 (IYCL…ECKV), and 237-296 (VKCP…KCLK). Topologically, residues 45–329 (CELPRPFEAM…GIFSQELDAW (285 aa)) are extracellular. Disulfide bonds link cysteine 109-cysteine 151, cysteine 137-cysteine 168, cysteine 173-cysteine 221, cysteine 202-cysteine 234, cysteine 239-cysteine 281, and cysteine 267-cysteine 294. An N-linked (GlcNAc...) asparagine glycan is attached at asparagine 181. Threonine 205 is a glycosylation site (O-linked (GalNAc...) threonine). Residues threonine 301 and threonine 304 are each glycosylated (O-linked (GalNAc...) threonine). Asparagine 310 carries N-linked (GlcNAc...) asparagine glycosylation. An O-linked (GalNAc...) threonine glycan is attached at threonine 312. Residues 330–350 (IIALIVITSIVGVFILCLIVL) form a helical membrane-spanning segment. Residues 351–365 (RCFEHRKKTNVSAAR) are Cytoplasmic-facing.

Interacts with C3b. Interacts with C4b. Interacts with moesin/MSN. Post-translationally, may be O-glycosylated. N-glycosylated. Present only in testis (at protein level).

Its subcellular location is the cytoplasmic vesicle. It is found in the secretory vesicle. The protein localises to the acrosome inner membrane. The protein resides in the secreted. Functionally, may be involved in the fusion of the spermatozoa with the oocyte during fertilization. In Mus musculus (Mouse), this protein is Membrane cofactor protein (Cd46).